The chain runs to 49 residues: Large ribosomal subunit protein bL33B (49 aa).

This sequence belongs to the bacterial ribosomal protein bL33 family.

The polypeptide is Large ribosomal subunit protein bL33B (Lactobacillus helveticus (strain DPC 4571)).